A 210-amino-acid chain; its full sequence is Orotate phosphoribosyltransferase (210 aa).

Residues Arg94, Lys98, His100, and 120–128 (EDLISTGGS) each bind 5-phospho-alpha-D-ribose 1-diphosphate. Orotate is bound at residue Ser124.

It belongs to the purine/pyrimidine phosphoribosyltransferase family. PyrE subfamily. As to quaternary structure, homodimer. Mg(2+) is required as a cofactor.

The catalysed reaction is orotidine 5'-phosphate + diphosphate = orotate + 5-phospho-alpha-D-ribose 1-diphosphate. It participates in pyrimidine metabolism; UMP biosynthesis via de novo pathway; UMP from orotate: step 1/2. Its function is as follows. Catalyzes the transfer of a ribosyl phosphate group from 5-phosphoribose 1-diphosphate to orotate, leading to the formation of orotidine monophosphate (OMP). This Bacillus cereus (strain G9842) protein is Orotate phosphoribosyltransferase.